The sequence spans 152 residues: Ribosome maturation factor RimP (152 aa).

This sequence belongs to the RimP family.

The protein resides in the cytoplasm. In terms of biological role, required for maturation of 30S ribosomal subunits. This chain is Ribosome maturation factor RimP, found in Citrobacter koseri (strain ATCC BAA-895 / CDC 4225-83 / SGSC4696).